The chain runs to 152 residues: Clitocypin-4/-3 (152 aa).

Belongs to the protease inhibitor I48 family. As to quaternary structure, homodimer.

Its function is as follows. Binds and inhibits cysteine proteinases. Inhibits most strongly papain and cathepsin L, more weakly bromelain and cathepsin B while it is completely ineffective against cathepsin H. The protein is Clitocypin-4/-3 (clt4) of Clitocybe nebularis (Clouded agaric).